The primary structure comprises 96 residues: Large ribosomal subunit protein bL27 (96 aa).

A propeptide spanning residues Met1–Phe9 is cleaved from the precursor. Residues Gly14 to Gly36 are disordered.

The protein belongs to the bacterial ribosomal protein bL27 family. In terms of processing, the N-terminus is cleaved by ribosomal processing cysteine protease Prp.

This is Large ribosomal subunit protein bL27 from Bacillus anthracis (strain A0248).